The sequence spans 141 residues: MSENVMTLQVITPAGMIYDHHANYITARTTNGEIGILPNMISTIAGLEIDELKVRRPDDETHVDYIAVNGGIIEIKDSLVTIVADSAERNRDIDVSRAERAKIRAEKALEVAKAEKKSDEINRAEVALHRALNRLNVSSHR.

This sequence belongs to the ATPase epsilon chain family. As to quaternary structure, F-type ATPases have 2 components, CF(1) - the catalytic core - and CF(0) - the membrane proton channel. CF(1) has five subunits: alpha(3), beta(3), gamma(1), delta(1), epsilon(1). CF(0) has three main subunits: a, b and c.

Its subcellular location is the cell membrane. In terms of biological role, produces ATP from ADP in the presence of a proton gradient across the membrane. In Lactococcus lactis subsp. lactis (strain IL1403) (Streptococcus lactis), this protein is ATP synthase epsilon chain.